A 460-amino-acid polypeptide reads, in one-letter code: Mercuric reductase (460 aa).

The 65-residue stretch at 1-65 folds into the HMA domain; the sequence is MTHLKITGMT…AVAGLGYKAM (65 aa). A metal cation contacts are provided by C11 and C14. FAD contacts are provided by A110, G130, and T135. The cysteines at positions 136 and 141 are disulfide-linked. FAD-binding residues include K145 and A211. The Hg(2+) site is built by C457 and C458.

This sequence belongs to the class-I pyridine nucleotide-disulfide oxidoreductase family. In terms of assembly, homodimer. FAD serves as cofactor.

It catalyses the reaction Hg + NADP(+) + H(+) = Hg(2+) + NADPH. Resistance to Hg(2+) in bacteria appears to be governed by a specialized system which includes mercuric reductase. MerA protein is responsible for volatilizing mercury as Hg(0). In Serratia marcescens, this protein is Mercuric reductase (merA).